A 108-amino-acid chain; its full sequence is Large ribosomal subunit protein uL22 (108 aa).

This sequence belongs to the universal ribosomal protein uL22 family. In terms of assembly, part of the 50S ribosomal subunit.

In terms of biological role, this protein binds specifically to 23S rRNA; its binding is stimulated by other ribosomal proteins, e.g. L4, L17, and L20. It is important during the early stages of 50S assembly. It makes multiple contacts with different domains of the 23S rRNA in the assembled 50S subunit and ribosome. Its function is as follows. The globular domain of the protein is located near the polypeptide exit tunnel on the outside of the subunit, while an extended beta-hairpin is found that lines the wall of the exit tunnel in the center of the 70S ribosome. This chain is Large ribosomal subunit protein uL22, found in Desulfatibacillum aliphaticivorans.